The sequence spans 389 residues: 3-ketoacyl-CoA thiolase (389 aa).

Cys-91 acts as the Acyl-thioester intermediate in catalysis. Catalysis depends on proton acceptor residues His-343 and Cys-373.

It belongs to the thiolase-like superfamily. Thiolase family. In terms of assembly, heterotetramer of two alpha chains (FadB) and two beta chains (FadA).

Its subcellular location is the cytoplasm. The enzyme catalyses an acyl-CoA + acetyl-CoA = a 3-oxoacyl-CoA + CoA. It participates in lipid metabolism; fatty acid beta-oxidation. Its function is as follows. Catalyzes the final step of fatty acid oxidation in which acetyl-CoA is released and the CoA ester of a fatty acid two carbons shorter is formed. The sequence is that of 3-ketoacyl-CoA thiolase from Pseudoalteromonas translucida (strain TAC 125).